Reading from the N-terminus, the 534-residue chain is Nitrate/nitrite transporter NrtP (534 aa).

Transmembrane regions (helical) follow at residues 19–39 (WFAF…ATTI), 52–72 (TIGL…GMLL), 79–99 (LTYS…ATAQ), 109–129 (LLMG…AEWF), 150–170 (AFSA…PGAF), 195–215 (AAIA…YFSV), 240–260 (DFWF…VLAW), 266–286 (NFLN…LYLF), 382–404 (WTMV…VAGT), 409–431 (IAVL…TFAI), 445–465 (GNVG…LLLL), and 485–505 (GFFQ…AFFL).

It belongs to the major facilitator superfamily. Nitrate/nitrite porter (TC 2.A.1.8) family.

It is found in the cell inner membrane. High-efficiency transport system for both nitrate and nitrite. The sequence is that of Nitrate/nitrite transporter NrtP from Picosynechococcus sp. (strain ATCC 27264 / PCC 7002 / PR-6) (Agmenellum quadruplicatum).